We begin with the raw amino-acid sequence, 339 residues long: DNA double-strand break repair nuclease NurA (339 aa).

Asp58 and Asp133 together coordinate Mn(2+).

It belongs to the NurA family. Homodimer. Forms a complex with HerA. It depends on Mn(2+) as a cofactor.

With respect to regulation, nuclease activity requires the presence of HerA. Another report shows endo- and exonuclease activity in the absence of HerA; HerA stimulates the exo- but not endonuclease. LhrC-Core (Hel112) inhibits the exonuclease activity of the HerA-NurA complex on ss- and dsDNA, has no effect on the nicking activity of NurA. Endo- and exonuclease activities are inhibited by ATP; ATP may subtract divalent ions from the reaction preventing nuclease activity, HerA can alleviate ATP inhibition. In terms of biological role, involved in DNA double-strand break (DSB) repair. Probably acts with HerA to stimulate resection of the 5' strand and produce the long 3' single-strand that is required for RadA loading. NurA and HerA together stimulate the end-resection of six nucleotides of a linear DNA substrate. Processes linear double-stranded (ds)DNA probes with 3' or 5' single-stranded overhangs or blunt ends. Has endonuclease activity on single-stranded (ss)DNA and nicking activity on dsDNA without HerA as well as 5'- and 3'-exonuclease activity on ssDNA. Binds ssDNA, dsDNA, forked and bubble DNA equally well. The protein is DNA double-strand break repair nuclease NurA of Saccharolobus solfataricus (strain ATCC 35092 / DSM 1617 / JCM 11322 / P2) (Sulfolobus solfataricus).